The chain runs to 144 residues: Deoxyuridine 5'-triphosphate nucleotidohydrolase (144 aa).

Substrate-binding positions include 63–65 (RSG), Asn76, and 80–82 (TID).

It belongs to the dUTPase family. It depends on Mg(2+) as a cofactor.

It catalyses the reaction dUTP + H2O = dUMP + diphosphate + H(+). It participates in pyrimidine metabolism; dUMP biosynthesis; dUMP from dCTP (dUTP route): step 2/2. Functionally, this enzyme is involved in nucleotide metabolism: it produces dUMP, the immediate precursor of thymidine nucleotides and it decreases the intracellular concentration of dUTP so that uracil cannot be incorporated into DNA. The polypeptide is Deoxyuridine 5'-triphosphate nucleotidohydrolase (Phocaeicola vulgatus (strain ATCC 8482 / DSM 1447 / JCM 5826 / CCUG 4940 / NBRC 14291 / NCTC 11154) (Bacteroides vulgatus)).